Consider the following 370-residue polypeptide: Dual-specificity RNA methyltransferase RlmN (370 aa).

Glu-93 functions as the Proton acceptor in the catalytic mechanism. The Radical SAM core domain maps to 99-337; the sequence is EEGRGTLCVS…VTTVRKTRGD (239 aa). Residues Cys-106 and Cys-343 are joined by a disulfide bond. [4Fe-4S] cluster contacts are provided by Cys-113, Cys-117, and Cys-120. S-adenosyl-L-methionine contacts are provided by residues 167-168, Ser-199, 221-223, and Asn-300; these read GE and SLH. The active-site S-methylcysteine intermediate is the Cys-343.

The protein belongs to the radical SAM superfamily. RlmN family. The cofactor is [4Fe-4S] cluster.

The protein localises to the cytoplasm. It catalyses the reaction adenosine(2503) in 23S rRNA + 2 reduced [2Fe-2S]-[ferredoxin] + 2 S-adenosyl-L-methionine = 2-methyladenosine(2503) in 23S rRNA + 5'-deoxyadenosine + L-methionine + 2 oxidized [2Fe-2S]-[ferredoxin] + S-adenosyl-L-homocysteine. It carries out the reaction adenosine(37) in tRNA + 2 reduced [2Fe-2S]-[ferredoxin] + 2 S-adenosyl-L-methionine = 2-methyladenosine(37) in tRNA + 5'-deoxyadenosine + L-methionine + 2 oxidized [2Fe-2S]-[ferredoxin] + S-adenosyl-L-homocysteine. Functionally, specifically methylates position 2 of adenine 2503 in 23S rRNA and position 2 of adenine 37 in tRNAs. m2A2503 modification seems to play a crucial role in the proofreading step occurring at the peptidyl transferase center and thus would serve to optimize ribosomal fidelity. This is Dual-specificity RNA methyltransferase RlmN from Francisella tularensis subsp. mediasiatica (strain FSC147).